Consider the following 287-residue polypeptide: ATP synthase gamma chain (287 aa).

This sequence belongs to the ATPase gamma chain family. As to quaternary structure, F-type ATPases have 2 components, CF(1) - the catalytic core - and CF(0) - the membrane proton channel. CF(1) has five subunits: alpha(3), beta(3), gamma(1), delta(1), epsilon(1). CF(0) has three main subunits: a, b and c.

The protein localises to the cell inner membrane. Its function is as follows. Produces ATP from ADP in the presence of a proton gradient across the membrane. The gamma chain is believed to be important in regulating ATPase activity and the flow of protons through the CF(0) complex. The polypeptide is ATP synthase gamma chain (Proteus mirabilis (strain HI4320)).